We begin with the raw amino-acid sequence, 1650 residues long: HEAT repeat-containing protein 1 homolog (1650 aa).

The disordered stretch occupies residues 1183–1210 (QYDSAASPGSSVAGGRGNRGHRIRQQSL). The HEAT repeat unit spans residues 1609-1645 (LLPFLNELIEDENKQVEAQCQKVINSLQHKFGETFWS).

It belongs to the HEATR1/UTP10 family.

The protein localises to the nucleus. The protein resides in the nucleolus. Its function is as follows. Involved in nucleolar processing of pre-18S ribosomal RNA. Involved in ribosome biosynthesis. In Caenorhabditis elegans, this protein is HEAT repeat-containing protein 1 homolog (toe-1).